A 222-amino-acid polypeptide reads, in one-letter code: Bone marrow proteoglycan (222 aa).

A signal peptide spans 1 to 16 (MKLPLLLALLFGAVSA). The propeptide at 17 to 105 (LHLRSETSTF…VKVVGIPGCQ (89 aa)) is acidic. O-linked (GalNAc...) threonine; partial glycosylation occurs at threonine 23. A glycan (O-linked (GalNAc...) serine) is linked at serine 24. Threonine 25 carries an O-linked (GalNAc...) threonine glycan. Positions 25–75 (TFETPLGAKTLPEDEETPEQEMEETPCRELEEEEEWGSGSEDASKKDGAVE) are disordered. Threonine 34 carries O-linked (GalNAc...) threonine; partial glycosylation. A compositionally biased stretch (acidic residues) spans 37–60 (EDEETPEQEMEETPCRELEEEEEW). O-linked (Xyl...) (chondroitin sulfate) serine glycosylation occurs at serine 62. The N-linked (GlcNAc...) asparagine glycan is linked to asparagine 86. The C-type lectin domain occupies 104-222 (CQTCRYLLVR…LRRLPFICSY (119 aa)). 2 disulfides stabilise this stretch: cysteine 125–cysteine 220 and cysteine 197–cysteine 212.

In pregnancy serum, the proform exists as a disulfide-linked 2:2 heterotetramer with PAPPA, as a disulfide-linked 2:2 heterotetramer with AGT, and as a complex (probably a 2:2:2 heterohexamer) with AGT and C3dg. Nitrated. In terms of tissue distribution, detected in plasma and urine (at protein level). Detected in placenta (at protein level). High levels of the proform in placenta and pregnancy serum; in placenta, localized to X cells of septa and anchoring villi. Lower levels in a variety of other tissues including kidney, myometrium, endometrium, ovaries, breast, prostate, bone marrow and colon.

The protein localises to the secreted. It localises to the cytoplasmic vesicle. Its subcellular location is the secretory vesicle. Cytotoxin and helminthotoxin. Also induces non-cytolytic histamine release from human basophils. Involved in antiparasitic defense mechanisms and immune hypersensitivity reactions. The proform acts as a proteinase inhibitor, reducing the activity of PAPPA. The polypeptide is Bone marrow proteoglycan (PRG2) (Homo sapiens (Human)).